The following is a 285-amino-acid chain: Formate channel FocA (285 aa).

The Cytoplasmic segment spans residues 1–30; the sequence is MKADNPFDLLLPAAMAKVAEEAGVYKATKH. Residues 31-56 form a helical membrane-spanning segment; it reads PLKTFYLAITAGVFISIAFVFYITAT. Residues 57 to 64 are Periplasmic-facing; the sequence is TGTGTMPF. A helical membrane pass occupies residues 65-85; the sequence is GMAKLVGGICFSLGLILCVVC. The Cytoplasmic segment spans residues 86 to 112; that stretch reads GADLFTSTVLIVVAKASGRITWGQLAK. Residues 113-135 form a helical membrane-spanning segment; sequence NWLNVYFGNLVGALLFVLLMWLS. Topologically, residues 136–160 are periplasmic; sequence GEYMTANGQWGLNVLQTADHKVHHT. A helical membrane pass occupies residues 161–181; sequence FIEAVCLGILANLMVCLAVWM. At 182–187 the chain is on the cytoplasmic side; sequence SYSGRS. The helical transmembrane segment at 188–205 threads the bilayer; the sequence is LMDKAFIMVLPVAMFVAS. Over 206-249 the chain is Periplasmic; it reads GFEHSIANMFMIPMGIVIRDFASPEFWTAVGSAPENFSHLTVMN. A helical membrane pass occupies residues 250-276; it reads FITDNLIPVTIGNIIGGGLLVGLTYWV. Residues 277–285 are Cytoplasmic-facing; it reads IYLRENDHH.

The protein belongs to the FNT transporter (TC 1.A.16) family. Homopentamer.

It is found in the cell inner membrane. The enzyme catalyses formate(in) = formate(out). Its function is as follows. Involved in the bidirectional transport of formate during mixed-acid fermentation. Functions to maintain relatively constant intracellular formate levels during growth, using different mechanisms for efflux and uptake of the anion. Is impermeable to water. This chain is Formate channel FocA, found in Escherichia coli O157:H7.